Consider the following 227-residue polypeptide: Cytochrome c oxidase subunit 2 (227 aa).

The Mitochondrial intermembrane portion of the chain corresponds to 1-14; the sequence is MAHPAQLGLQDATS. A helical transmembrane segment spans residues 15–45; the sequence is PVMEELITFHDHALMAMSLISLLVLYALFST. Residues 46-59 are Mitochondrial matrix-facing; sequence LTTKMTNTNITDAQ. A helical transmembrane segment spans residues 60–87; that stretch reads EMETIWTILPAIILVLIAFPSLRILYMT. Residues 88–227 are Mitochondrial intermembrane-facing; the sequence is DEVNNPSFTI…IFEMGPVFTL (140 aa). His-161, Cys-196, Glu-198, Cys-200, His-204, and Met-207 together coordinate Cu cation. Glu-198 serves as a coordination point for Mg(2+).

The protein belongs to the cytochrome c oxidase subunit 2 family. Component of the cytochrome c oxidase (complex IV, CIV), a multisubunit enzyme composed of 14 subunits. The complex is composed of a catalytic core of 3 subunits MT-CO1, MT-CO2 and MT-CO3, encoded in the mitochondrial DNA, and 11 supernumerary subunits COX4I, COX5A, COX5B, COX6A, COX6B, COX6C, COX7A, COX7B, COX7C, COX8 and NDUFA4, which are encoded in the nuclear genome. The complex exists as a monomer or a dimer and forms supercomplexes (SCs) in the inner mitochondrial membrane with NADH-ubiquinone oxidoreductase (complex I, CI) and ubiquinol-cytochrome c oxidoreductase (cytochrome b-c1 complex, complex III, CIII), resulting in different assemblies (supercomplex SCI(1)III(2)IV(1) and megacomplex MCI(2)III(2)IV(2)). Found in a complex with TMEM177, COA6, COX18, COX20, SCO1 and SCO2. Interacts with TMEM177 in a COX20-dependent manner. Interacts with COX20. Interacts with COX16. It depends on Cu cation as a cofactor.

The protein resides in the mitochondrion inner membrane. It carries out the reaction 4 Fe(II)-[cytochrome c] + O2 + 8 H(+)(in) = 4 Fe(III)-[cytochrome c] + 2 H2O + 4 H(+)(out). In terms of biological role, component of the cytochrome c oxidase, the last enzyme in the mitochondrial electron transport chain which drives oxidative phosphorylation. The respiratory chain contains 3 multisubunit complexes succinate dehydrogenase (complex II, CII), ubiquinol-cytochrome c oxidoreductase (cytochrome b-c1 complex, complex III, CIII) and cytochrome c oxidase (complex IV, CIV), that cooperate to transfer electrons derived from NADH and succinate to molecular oxygen, creating an electrochemical gradient over the inner membrane that drives transmembrane transport and the ATP synthase. Cytochrome c oxidase is the component of the respiratory chain that catalyzes the reduction of oxygen to water. Electrons originating from reduced cytochrome c in the intermembrane space (IMS) are transferred via the dinuclear copper A center (CU(A)) of subunit 2 and heme A of subunit 1 to the active site in subunit 1, a binuclear center (BNC) formed by heme A3 and copper B (CU(B)). The BNC reduces molecular oxygen to 2 water molecules using 4 electrons from cytochrome c in the IMS and 4 protons from the mitochondrial matrix. The polypeptide is Cytochrome c oxidase subunit 2 (MT-CO2) (Mandrillus leucophaeus (Drill)).